Reading from the N-terminus, the 146-residue chain is Mu-like prophage FluMu G protein 1 (146 aa).

It to phage Mu protein G.

The polypeptide is Mu-like prophage FluMu G protein 1 (Haemophilus influenzae (strain ATCC 51907 / DSM 11121 / KW20 / Rd)).